We begin with the raw amino-acid sequence, 81 residues long: Defensin-like protein 311 (81 aa).

Residues 1-24 (MEKISAFFVILFLVSSCLVTMSVG) form the signal peptide. 3 cysteine pairs are disulfide-bonded: C27/C50, C33/C57, and C41/C59.

The protein belongs to the DEFL family.

The protein localises to the secreted. In Arabidopsis thaliana (Mouse-ear cress), this protein is Defensin-like protein 311.